Here is a 373-residue protein sequence, read N- to C-terminus: Muconate cycloisomerase 1 (373 aa).

Lys169 is a catalytic residue. Lys169 acts as the Proton acceptor in catalysis. The Mn(2+) site is built by Asp198, Glu224, and Asp249. The active-site Proton donor is Glu327.

This sequence belongs to the mandelate racemase/muconate lactonizing enzyme family. It depends on Mn(2+) as a cofactor.

The catalysed reaction is (S)-muconolactone = cis,cis-muconate + H(+). This chain is Muconate cycloisomerase 1 (catB), found in Rhodococcus opacus (Nocardia opaca).